The primary structure comprises 178 residues: Endoribonuclease YbeY (178 aa).

3 residues coordinate Zn(2+): His-118, His-122, and His-128.

It belongs to the endoribonuclease YbeY family. Zn(2+) is required as a cofactor.

It localises to the cytoplasm. Its function is as follows. Single strand-specific metallo-endoribonuclease involved in late-stage 70S ribosome quality control and in maturation of the 3' terminus of the 16S rRNA. This chain is Endoribonuclease YbeY, found in Mycolicibacterium gilvum (strain PYR-GCK) (Mycobacterium gilvum (strain PYR-GCK)).